The sequence spans 172 residues: 3-hydroxydecanoyl-[acyl-carrier-protein] dehydratase (172 aa).

Residue histidine 71 is part of the active site.

The protein belongs to the thioester dehydratase family. FabA subfamily. In terms of assembly, homodimer.

It is found in the cytoplasm. It catalyses the reaction a (3R)-hydroxyacyl-[ACP] = a (2E)-enoyl-[ACP] + H2O. It carries out the reaction (3R)-hydroxydecanoyl-[ACP] = (2E)-decenoyl-[ACP] + H2O. The catalysed reaction is (2E)-decenoyl-[ACP] = (3Z)-decenoyl-[ACP]. Its pathway is lipid metabolism; fatty acid biosynthesis. In terms of biological role, necessary for the introduction of cis unsaturation into fatty acids. Catalyzes the dehydration of (3R)-3-hydroxydecanoyl-ACP to E-(2)-decenoyl-ACP and then its isomerization to Z-(3)-decenoyl-ACP. Can catalyze the dehydratase reaction for beta-hydroxyacyl-ACPs with saturated chain lengths up to 16:0, being most active on intermediate chain length. This Erwinia tasmaniensis (strain DSM 17950 / CFBP 7177 / CIP 109463 / NCPPB 4357 / Et1/99) protein is 3-hydroxydecanoyl-[acyl-carrier-protein] dehydratase.